The sequence spans 101 residues: NAD(P)H-quinone oxidoreductase subunit 4L, chloroplastic (101 aa).

The next 3 membrane-spanning stretches (helical) occupy residues 2-22 (MLEHVLVLSAYLFSIGIYGLI), 32-52 (MCLELILNAVNMNLVTFSDLF), and 61-81 (IFSIFVIAIAAAEAAIGPAIV).

Belongs to the complex I subunit 4L family. NDH is composed of at least 16 different subunits, 5 of which are encoded in the nucleus.

The protein localises to the plastid. The protein resides in the chloroplast thylakoid membrane. It catalyses the reaction a plastoquinone + NADH + (n+1) H(+)(in) = a plastoquinol + NAD(+) + n H(+)(out). The catalysed reaction is a plastoquinone + NADPH + (n+1) H(+)(in) = a plastoquinol + NADP(+) + n H(+)(out). Functionally, NDH shuttles electrons from NAD(P)H:plastoquinone, via FMN and iron-sulfur (Fe-S) centers, to quinones in the photosynthetic chain and possibly in a chloroplast respiratory chain. The immediate electron acceptor for the enzyme in this species is believed to be plastoquinone. Couples the redox reaction to proton translocation, and thus conserves the redox energy in a proton gradient. This Chloranthus spicatus (Chulantree) protein is NAD(P)H-quinone oxidoreductase subunit 4L, chloroplastic.